Reading from the N-terminus, the 726-residue chain is Catalase-peroxidase 1 (726 aa).

Residues 1–33 (MSTSDDIHNTTATGKCPFHQGGHDQSAGAGTTT) form a disordered region. Positions 105–226 (WHGAGTYRSI…LGATEMGLIY (122 aa)) form a cross-link, tryptophyl-tyrosyl-methioninium (Trp-Tyr) (with M-252). H106 functions as the Proton acceptor in the catalytic mechanism. Residues 226–252 (YVNPEGPDHSGEPLSAAAAIRATFGNM) constitute a cross-link (tryptophyl-tyrosyl-methioninium (Tyr-Met) (with W-105)). H267 contacts heme b.

Belongs to the peroxidase family. Peroxidase/catalase subfamily. Homodimer or homotetramer. The cofactor is heme b. Formation of the three residue Trp-Tyr-Met cross-link is important for the catalase, but not the peroxidase activity of the enzyme.

It catalyses the reaction H2O2 + AH2 = A + 2 H2O. It carries out the reaction 2 H2O2 = O2 + 2 H2O. Functionally, bifunctional enzyme with both catalase and broad-spectrum peroxidase activity. This is Catalase-peroxidase 1 from Escherichia coli O157:H7.